A 110-amino-acid polypeptide reads, in one-letter code: U1-lycotoxin-Ls1kk (110 aa).

A signal peptide spans 1 to 20 (MKFVLLFGVLLVTLFSYSSA). The propeptide occupies 21 to 44 (EMFDDFDQADEDELLSLIEKEEAR). Cystine bridges form between Cys-47–Cys-62, Cys-54–Cys-71, Cys-61–Cys-89, and Cys-73–Cys-87.

Belongs to the neurotoxin 19 (CSTX) family. 03 subfamily. In terms of tissue distribution, expressed by the venom gland.

The protein localises to the secreted. In Lycosa singoriensis (Wolf spider), this protein is U1-lycotoxin-Ls1kk.